The sequence spans 286 residues: tRNA (guanine-N(7)-)-methyltransferase (286 aa).

Positions 1-21 (MTNPESTAIDPVAAMGTDHTE) are disordered. The S-adenosyl-L-methionine site is built by glutamate 91, glutamate 116, asparagine 143, and aspartate 165. Aspartate 165 is a catalytic residue. Substrate contacts are provided by residues lysine 169, aspartate 201, and 262–265 (TNFE).

Belongs to the class I-like SAM-binding methyltransferase superfamily. TrmB family.

The catalysed reaction is guanosine(46) in tRNA + S-adenosyl-L-methionine = N(7)-methylguanosine(46) in tRNA + S-adenosyl-L-homocysteine. It functions in the pathway tRNA modification; N(7)-methylguanine-tRNA biosynthesis. Its function is as follows. Catalyzes the formation of N(7)-methylguanine at position 46 (m7G46) in tRNA. This is tRNA (guanine-N(7)-)-methyltransferase from Bifidobacterium longum (strain NCC 2705).